The sequence spans 66 residues: Large ribosomal subunit protein bL33c (66 aa).

It belongs to the bacterial ribosomal protein bL33 family.

It is found in the plastid. The protein resides in the chloroplast. This chain is Large ribosomal subunit protein bL33c, found in Welwitschia mirabilis (Tree tumbo).